Reading from the N-terminus, the 263-residue chain is Tryptophan 2,3-dioxygenase (263 aa).

Substrate-binding positions include 32-36 (FIIVH), Tyr-94, and Arg-98. Position 221 (His-221) interacts with heme. Thr-235 is a substrate binding site.

The protein belongs to the tryptophan 2,3-dioxygenase family. Homotetramer. It depends on heme as a cofactor.

The catalysed reaction is L-tryptophan + O2 = N-formyl-L-kynurenine. It participates in amino-acid degradation; L-tryptophan degradation via kynurenine pathway; L-kynurenine from L-tryptophan: step 1/2. Heme-dependent dioxygenase that catalyzes the oxidative cleavage of the L-tryptophan (L-Trp) pyrrole ring and converts L-tryptophan to N-formyl-L-kynurenine. Catalyzes the oxidative cleavage of the indole moiety. This is Tryptophan 2,3-dioxygenase from Erythrobacter litoralis (strain HTCC2594).